Here is a 233-residue protein sequence, read N- to C-terminus: Preprocaerulein type-4 (233 aa).

Positions 1-26 (MFKGILLCVLFAVLSANPLSQPEGFA) are cleaved as a signal peptide. Positions 27–72 (DEERDVRGLASLLGKALKATLKIGTHFLGGAPQQREANDERRFADG) are excised as a propeptide. Glutamine 73 carries the pyrrolidone carboxylic acid modification. Tyrosine 76 bears the Sulfotyrosine mark. A Phenylalanine amide modification is found at phenylalanine 82. Positions 86–87 (DG) are excised as a propeptide. Residue glutamine 88 is modified to Pyrrolidone carboxylic acid. Tyrosine 91 carries the post-translational modification Sulfotyrosine. Phenylalanine 97 carries the post-translational modification Phenylalanine amide. Residues 101–151 (DDEDDVHERDVRGFGSFLGKALKAALKIGANALGGAPQQREANDERRFADG) constitute a propeptide that is removed on maturation. The residue at position 152 (glutamine 152) is a Pyrrolidone carboxylic acid. At tyrosine 155 the chain carries Sulfotyrosine. Residue phenylalanine 161 is modified to Phenylalanine amide. The propeptide occupies 165 to 215 (DDEDDVNERDVRGFGSFLGKALKAALKIGANALGGSPQQREANDERRFADG). Residues 197 to 233 (LGGSPQQREANDERRFADGQQDYTGWMDFGRRNGEDD) are disordered. A Pyrrolidone carboxylic acid modification is found at glutamine 216. Tyrosine 219 carries the post-translational modification Sulfotyrosine. Residue phenylalanine 225 is modified to Phenylalanine amide. The propeptide occupies 229–233 (NGEDD).

It belongs to the gastrin/cholecystokinin family. As to expression, expressed by the skin glands.

Its subcellular location is the secreted. The pharmacological activities of caerulein are quite similar to the physiological activities of gastrin and related peptides. This chain is Preprocaerulein type-4, found in Xenopus laevis (African clawed frog).